The primary structure comprises 157 residues: ATP synthase subunit b' (157 aa).

Residues 22-42 form a helical membrane-spanning segment; sequence ATLPLIAIQFLLLVAVLNSLF.

It belongs to the ATPase B chain family. In terms of assembly, F-type ATPases have 2 components, F(1) - the catalytic core - and F(0) - the membrane proton channel. F(1) has five subunits: alpha(3), beta(3), gamma(1), delta(1), epsilon(1). F(0) has four main subunits: a(1), b(1), b'(1) and c(10-14). The alpha and beta chains form an alternating ring which encloses part of the gamma chain. F(1) is attached to F(0) by a central stalk formed by the gamma and epsilon chains, while a peripheral stalk is formed by the delta, b and b' chains.

It localises to the cellular thylakoid membrane. F(1)F(0) ATP synthase produces ATP from ADP in the presence of a proton or sodium gradient. F-type ATPases consist of two structural domains, F(1) containing the extramembraneous catalytic core and F(0) containing the membrane proton channel, linked together by a central stalk and a peripheral stalk. During catalysis, ATP synthesis in the catalytic domain of F(1) is coupled via a rotary mechanism of the central stalk subunits to proton translocation. Its function is as follows. Component of the F(0) channel, it forms part of the peripheral stalk, linking F(1) to F(0). The b'-subunit is a diverged and duplicated form of b found in plants and photosynthetic bacteria. The chain is ATP synthase subunit b' from Synechococcus sp. (strain JA-2-3B'a(2-13)) (Cyanobacteria bacterium Yellowstone B-Prime).